Consider the following 367-residue polypeptide: Alginate lyase (367 aa).

The signal sequence occupies residues 1 to 27 (MKTSHLIRITLPGALAAALLASQVSQA). Substrate is bound by residues 65-66 (SK), 138-139 (HT), and Tyr-256.

The protein belongs to the polysaccharide lyase 5 family.

The protein localises to the periplasm. The enzyme catalyses Eliminative cleavage of alginate to give oligosaccharides with 4-deoxy-alpha-L-erythro-hex-4-enuronosyl groups at their non-reducing ends and beta-D-mannuronate at their reducing end.. Its function is as follows. Catalyzes the depolymerization of alginate by cleaving the beta-1,4 glycosidic bond between two adjacent sugar residues via a beta-elimination mechanism. May serve to degrade mislocalized alginate that is trapped in the periplasmic space. This Pseudomonas paraeruginosa (strain DSM 24068 / PA7) (Pseudomonas aeruginosa (strain PA7)) protein is Alginate lyase.